The sequence spans 393 residues: Small RNA 2'-O-methyltransferase (393 aa).

3 residues coordinate S-adenosyl-L-methionine: Ser60, Asp78, and Ser114. Mg(2+) is bound by residues Glu132, Glu135, His136, and His181. A disordered region spans residues 283 to 309 (RVSHLPRRKEQDGEQGDKPKDIGGSKA). The span at 290–305 (RKEQDGEQGDKPKDIG) shows a compositional bias: basic and acidic residues.

This sequence belongs to the methyltransferase superfamily. HEN1 family. Requires Mg(2+) as cofactor.

The protein localises to the cytoplasm. It carries out the reaction small RNA 3'-end nucleotide + S-adenosyl-L-methionine = small RNA 3'-end 2'-O-methylnucleotide + S-adenosyl-L-homocysteine + H(+). Methyltransferase that adds a 2'-O-methyl group at the 3'-end of piRNAs, a class of 24 to 30 nucleotide RNAs that are generated by a Dicer-independent mechanism and are primarily derived from transposons and other repeated sequence elements. This probably protects the 3'-end of piRNAs from uridylation activity and subsequent degradation. Stabilization of piRNAs is essential for gametogenesis. This is Small RNA 2'-O-methyltransferase (HENMT1) from Macaca fascicularis (Crab-eating macaque).